Here is a 430-residue protein sequence, read N- to C-terminus: MMRRLSTQDQSFKQVFADLLAFETVNDPELLKTVDQIIADVRQYGDEHVLKLTQQFDRHPAHQFSDLELTQEQLKTAFEALTAEIREALELAAERIRSFHQAQKQEGWSYVDALGNTLGQKVTPLDRVGIYVPGGLASYPSSVLMNAIPAHVAGVPEIIMVVPAPNGELNSLVLAAAYLAGVSRIFTIGGAQAVAALAYGTQTIPAVDKITGPGNRFVAAAKRAVFGQVGIDMIAGPSEILVYAEGQNNAKWLAMDLLSQAEHDTVAQAIFITPDEALLDEVAQAIEEHLAALPKADIARTSIANRGALVLVKDRDEAIELINQVAPEHLELCLDESEAMSQKIRHAGAIFMGRYTPEAIGDYCAGPNHVLPTSGTARFSSPLGVYDFQKRSSLIMCSQEGVKSLAKAADVLAQQENLDAHARSARYRYQ.

The NAD(+) site is built by Tyr131, Gln192, and Asn215. Residues Ser238, Gln260, and His263 each contribute to the substrate site. Zn(2+)-binding residues include Gln260 and His263. Residues Glu328 and His329 each act as proton acceptor in the active site. Substrate contacts are provided by His329, Asp362, Glu416, and His421. Asp362 provides a ligand contact to Zn(2+). Position 421 (His421) interacts with Zn(2+).

Belongs to the histidinol dehydrogenase family. It depends on Zn(2+) as a cofactor.

The catalysed reaction is L-histidinol + 2 NAD(+) + H2O = L-histidine + 2 NADH + 3 H(+). It participates in amino-acid biosynthesis; L-histidine biosynthesis; L-histidine from 5-phospho-alpha-D-ribose 1-diphosphate: step 9/9. Functionally, catalyzes the sequential NAD-dependent oxidations of L-histidinol to L-histidinaldehyde and then to L-histidine. This chain is Histidinol dehydrogenase, found in Acinetobacter baylyi (strain ATCC 33305 / BD413 / ADP1).